The primary structure comprises 426 residues: Gamma-glutamylputrescine oxidoreductase (426 aa).

The protein belongs to the gamma-glutamylputrescine oxidoreductase family.

The catalysed reaction is gamma-L-glutamylputrescine + O2 + H2O = 4-(gamma-L-glutamylamino)butanal + H2O2 + NH4(+). The protein operates within amine and polyamine degradation; putrescine degradation; 4-aminobutanoate from putrescine: step 2/4. Its function is as follows. Involved in the breakdown of putrescine via the oxidation of L-glutamylputrescine. This Escherichia coli (strain K12) protein is Gamma-glutamylputrescine oxidoreductase (puuB).